The chain runs to 542 residues: Chaperonin GroEL (542 aa).

Residues Thr29–Pro32, Asp86–Thr90, Gly413, Asn476–Ala478, and Asp492 each bind ATP. Positions Pro522–Met542 are disordered.

The protein belongs to the chaperonin (HSP60) family. As to quaternary structure, forms a cylinder of 14 subunits composed of two heptameric rings stacked back-to-back. Interacts with the co-chaperonin GroES.

Its subcellular location is the cytoplasm. It catalyses the reaction ATP + H2O + a folded polypeptide = ADP + phosphate + an unfolded polypeptide.. Functionally, together with its co-chaperonin GroES, plays an essential role in assisting protein folding. The GroEL-GroES system forms a nano-cage that allows encapsulation of the non-native substrate proteins and provides a physical environment optimized to promote and accelerate protein folding. In Listeria monocytogenes serotype 4b (strain CLIP80459), this protein is Chaperonin GroEL.